The following is a 953-amino-acid chain: Translation initiation factor IF-2 (953 aa).

The disordered stretch occupies residues 55–340; the sequence is GVTTEAPAAS…KSKRQKRNEY (286 aa). Low complexity predominate over residues 81-93; the sequence is KPAATPQQAAKPA. Over residues 110 to 119 the composition is skewed to pro residues; the sequence is PKPAAKPVPK. Low complexity-rich tracts occupy residues 123 to 133 and 143 to 160; these read SAAKAESSAPK and KPAAQSSTTATPGSMPRP. Over residues 202–219 the composition is skewed to gly residues; it reads PGGGPRPGGNRPQGGQGG. Residues 233–248 show a composition bias toward low complexity; sequence QPRPQGGSRSQQSGGQ. Residues 280–323 show a composition bias toward gly residues; the sequence is NGRGGAGGQGGRPGFGGGRPGGGGSAGGRGGRRGGTAGAFGRPG. Residues 327-336 show a composition bias toward basic residues; the sequence is RKGRKSKRQK. Positions 449–621 constitute a tr-type G domain; it reads KRPPVVTVMG…VLLTADASLD (173 aa). The tract at residues 458–465 is G1; the sequence is GHVDHGKT. Residue 458-465 coordinates GTP; that stretch reads GHVDHGKT. Positions 483 to 487 are G2; the sequence is GITQG. The interval 508-511 is G3; that stretch reads DTPG. Residues 508 to 512 and 562 to 565 each bind GTP; these read DTPGH and NKID. Residues 562 to 565 are G4; that stretch reads NKID. Residues 598–600 form a G5 region; sequence SAK.

This sequence belongs to the TRAFAC class translation factor GTPase superfamily. Classic translation factor GTPase family. IF-2 subfamily.

It is found in the cytoplasm. Functionally, one of the essential components for the initiation of protein synthesis. Protects formylmethionyl-tRNA from spontaneous hydrolysis and promotes its binding to the 30S ribosomal subunits. Also involved in the hydrolysis of GTP during the formation of the 70S ribosomal complex. This Corynebacterium diphtheriae (strain ATCC 700971 / NCTC 13129 / Biotype gravis) protein is Translation initiation factor IF-2.